An 82-amino-acid chain; its full sequence is Large ribosomal subunit protein bL31B (82 aa).

The protein belongs to the bacterial ribosomal protein bL31 family. Type B subfamily. In terms of assembly, part of the 50S ribosomal subunit.

This chain is Large ribosomal subunit protein bL31B, found in Bacillus velezensis (strain DSM 23117 / BGSC 10A6 / LMG 26770 / FZB42) (Bacillus amyloliquefaciens subsp. plantarum).